The chain runs to 373 residues: Alcohol dehydrogenase 2 (373 aa).

8 residues coordinate Zn(2+): cysteine 47, threonine 49, histidine 69, cysteine 99, cysteine 102, cysteine 105, cysteine 113, and cysteine 177. An alcohol is bound by residues threonine 49 and histidine 69. Threonine 49 provides a ligand contact to NAD(+). NAD(+)-binding positions include 202 to 207, aspartate 226, lysine 231, threonine 272, phenylalanine 316, and arginine 366; that span reads GLGAVG.

The protein belongs to the zinc-containing alcohol dehydrogenase family. Homodimer. The cofactor is Zn(2+).

It localises to the cytoplasm. It carries out the reaction a primary alcohol + NAD(+) = an aldehyde + NADH + H(+). The catalysed reaction is a secondary alcohol + NAD(+) = a ketone + NADH + H(+). In Hordeum vulgare (Barley), this protein is Alcohol dehydrogenase 2 (ADH2).